Reading from the N-terminus, the 188-residue chain is Protein TIFY 9 (188 aa).

A disordered region spans residues 20–41 (DADDRHAKSGGSSASSSSSIRG). The span at 28–38 (SGGSSASSSSS) shows a compositional bias: low complexity. The region spanning 80-114 (AAAAAAPMTLFYNGSVAVFDVSHDKAEAIMRMATE) is the Tify domain. Residues 135–160 (PLTRTKSLQRFLSKRKERLTSLGPYQ) carry the Jas motif. Residues 156-188 (LGPYQVGGPAAVGATTSTTTKSFLAKEEEHTAS) form a disordered region. Basic and acidic residues predominate over residues 179–188 (LAKEEEHTAS).

This sequence belongs to the TIFY/JAZ family. Interacts with COI1A and COI2 in a coronatine-dependent manner. Coronatine is an analog of jasmonoyl isoleucine (JA-Ile). Ubiquitinated. Targeted for degradation by the SCF(COI1) E3 ubiquitin ligase-proteasome pathway during jasmonate signaling.

In terms of biological role, repressor of jasmonate responses. The protein is Protein TIFY 9 of Oryza sativa subsp. japonica (Rice).